The chain runs to 112 residues: Ribonuclease VapC8 (112 aa).

Residues L10–E109 form the PINc domain. 2 residues coordinate Mg(2+): D12 and D101.

It belongs to the PINc/VapC protein family. Requires Mg(2+) as cofactor.

Functionally, toxic component of a type II toxin-antitoxin (TA) system. An RNase. The cognate antitoxin is VapB8. The sequence is that of Ribonuclease VapC8 (vapC8) from Mycobacterium tuberculosis (strain CDC 1551 / Oshkosh).